We begin with the raw amino-acid sequence, 460 residues long: UDP-N-acetylmuramate--L-alanine ligase (460 aa).

Residue 118 to 124 (GTHGKTT) participates in ATP binding.

Belongs to the MurCDEF family.

It is found in the cytoplasm. It carries out the reaction UDP-N-acetyl-alpha-D-muramate + L-alanine + ATP = UDP-N-acetyl-alpha-D-muramoyl-L-alanine + ADP + phosphate + H(+). It participates in cell wall biogenesis; peptidoglycan biosynthesis. Cell wall formation. The chain is UDP-N-acetylmuramate--L-alanine ligase from Gloeobacter violaceus (strain ATCC 29082 / PCC 7421).